The following is a 362-amino-acid chain: Phosphoserine aminotransferase (362 aa).

L-glutamate is bound by residues Ser9 and Arg42. Residues 76–77, Trp102, Thr153, Asp174, and Gln197 each bind pyridoxal 5'-phosphate; that span reads GR. At Lys198 the chain carries N6-(pyridoxal phosphate)lysine. 239–240 provides a ligand contact to pyridoxal 5'-phosphate; the sequence is NT.

It belongs to the class-V pyridoxal-phosphate-dependent aminotransferase family. SerC subfamily. As to quaternary structure, homodimer. Requires pyridoxal 5'-phosphate as cofactor.

The protein localises to the cytoplasm. It catalyses the reaction O-phospho-L-serine + 2-oxoglutarate = 3-phosphooxypyruvate + L-glutamate. It carries out the reaction 4-(phosphooxy)-L-threonine + 2-oxoglutarate = (R)-3-hydroxy-2-oxo-4-phosphooxybutanoate + L-glutamate. The protein operates within amino-acid biosynthesis; L-serine biosynthesis; L-serine from 3-phospho-D-glycerate: step 2/3. It participates in cofactor biosynthesis; pyridoxine 5'-phosphate biosynthesis; pyridoxine 5'-phosphate from D-erythrose 4-phosphate: step 3/5. Functionally, catalyzes the reversible conversion of 3-phosphohydroxypyruvate to phosphoserine and of 3-hydroxy-2-oxo-4-phosphonooxybutanoate to phosphohydroxythreonine. This is Phosphoserine aminotransferase from Escherichia coli O157:H7.